The sequence spans 227 residues: MAKKERPRPEKLSVYLYIPNIVGYMRVLLNCVAFAVCFSNKPLFSVLYFFSFCCDAVDGWVARRFNQVSTFGAVLDMVTDRVSTACLLVILSQIYRPSLVFLSLLALDIASHWLQMYSTFLAGKSSHKDVKDSTSWLFRLYYGNRIFMCYCCVSCEVLYIILLLIAKNQSENLLNVVVATLTQISPLSFLLALTLFGWSMKQTINVIQMKTAADVCVLYDIEKQQKP.

Helical transmembrane passes span L12–V36 and P42–V61. Residues D55 and D58 each coordinate Mg(2+). Residues G59, R63, and S69 each contribute to the a CDP-1,2-diacyl-sn-glycerol site. 4 helical membrane passes run A73–Y95, F101–A122, Y142–I165, and V177–M200. Positions 76 and 80 each coordinate Mg(2+). D80 functions as the Proton acceptor in the catalytic mechanism.

The protein belongs to the CDP-alcohol phosphatidyltransferase class-I family. It depends on Mg(2+) as a cofactor. Requires Mn(2+) as cofactor. In terms of tissue distribution, expressed in stems, flowers, shoots and roots. Present in epidermal tissues.

It is found in the membrane. It catalyses the reaction a CDP-1,2-diacyl-sn-glycerol + myo-inositol = a 1,2-diacyl-sn-glycero-3-phospho-(1D-myo-inositol) + CMP + H(+). Its function is as follows. Catalyzes the biosynthesis of phosphatidylinositol (PtdIns) as well as PtdIns:inositol exchange reaction. May thus act to reduce an excessive cellular PtdIns content. The exchange activity is due to the reverse reaction of PtdIns synthase and is dependent on CMP, which is tightly bound to the enzyme. The polypeptide is CDP-diacylglycerol--inositol 3-phosphatidyltransferase 1 (PIS1) (Arabidopsis thaliana (Mouse-ear cress)).